The sequence spans 68 residues: Large ribosomal subunit protein bL31 (68 aa).

4 residues coordinate Zn(2+): cysteine 16, cysteine 18, cysteine 37, and cysteine 40.

This sequence belongs to the bacterial ribosomal protein bL31 family. Type A subfamily. Part of the 50S ribosomal subunit. Requires Zn(2+) as cofactor.

Functionally, binds the 23S rRNA. The polypeptide is Large ribosomal subunit protein bL31 (Nitrosococcus oceani (strain ATCC 19707 / BCRC 17464 / JCM 30415 / NCIMB 11848 / C-107)).